Here is a 306-residue protein sequence, read N- to C-terminus: N-acetylmuramic acid 6-phosphate etherase (306 aa).

The SIS domain maps to 60 to 223 (TAAALRGGGR…STGAMVRLGK (164 aa)). The Proton donor role is filled by E88. Residue E119 is part of the active site.

This sequence belongs to the GCKR-like family. MurNAc-6-P etherase subfamily. As to quaternary structure, homodimer.

It carries out the reaction N-acetyl-D-muramate 6-phosphate + H2O = N-acetyl-D-glucosamine 6-phosphate + (R)-lactate. Its pathway is amino-sugar metabolism; N-acetylmuramate degradation. Specifically catalyzes the cleavage of the D-lactyl ether substituent of MurNAc 6-phosphate, producing GlcNAc 6-phosphate and D-lactate. The sequence is that of N-acetylmuramic acid 6-phosphate etherase from Gloeobacter violaceus (strain ATCC 29082 / PCC 7421).